A 453-amino-acid chain; its full sequence is Putative sodium-coupled neutral amino acid transporter 11 (453 aa).

The segment covering 1–10 (MSYQQPQLSG) has biased composition (polar residues). The segment at 1 to 34 (MSYQQPQLSGPLQRETDSSDRESLISGHEHGGKS) is disordered. Positions 14–32 (RETDSSDRESLISGHEHGG) are enriched in basic and acidic residues. Helical transmembrane passes span 39–59 (AVFN…PYSM), 66–86 (LGIL…VLLI), 106–126 (GFPG…IAMI), 150–170 (GWFI…TLPL), 179–199 (LGKI…IVMT), 222–242 (AIQA…CFLV), 262–282 (ILVS…TFTG), 299–319 (VTFG…IECF), 337–357 (VFHT…SLMI), 359–379 (CLGI…IFII), and 398–418 (IMAC…FVMA). Asparagine 438 and asparagine 443 each carry an N-linked (GlcNAc...) asparagine glycan.

It belongs to the amino acid/polyamine transporter 2 family.

The protein resides in the membrane. Its function is as follows. Putative sodium-dependent amino acid/proton antiporter. The sequence is that of Putative sodium-coupled neutral amino acid transporter 11 (Slc38a11) from Mus musculus (Mouse).